A 705-amino-acid polypeptide reads, in one-letter code: Prolyl endopeptidase (705 aa).

Residues 1–20 (MKYNKLSVAVAAFAFAAVSA) form the signal peptide. Residues S556 and H675 each act as charge relay system in the active site.

Belongs to the peptidase S9A family. Monomer.

It localises to the periplasm. The catalysed reaction is Hydrolysis of Pro-|-Xaa &gt;&gt; Ala-|-Xaa in oligopeptides.. Its function is as follows. Cleaves peptide bonds on the C-terminal side of prolyl residues within peptides that are up to approximately 30 amino acids long. Has an absolute requirement for an X-Pro bond in the trans configuration immediately preceding the Pro-Y scissible bond. The sequence is that of Prolyl endopeptidase (f1pep1) from Elizabethkingia meningoseptica (Chryseobacterium meningosepticum).